We begin with the raw amino-acid sequence, 473 residues long: Ribosomal RNA small subunit methyltransferase F (473 aa).

S-adenosyl-L-methionine contacts are provided by residues alanine 124 to lysine 130, glutamate 148, aspartate 175, and aspartate 193. Residue cysteine 246 is the Nucleophile of the active site.

The protein belongs to the class I-like SAM-binding methyltransferase superfamily. RsmB/NOP family.

Its subcellular location is the cytoplasm. The catalysed reaction is cytidine(1407) in 16S rRNA + S-adenosyl-L-methionine = 5-methylcytidine(1407) in 16S rRNA + S-adenosyl-L-homocysteine + H(+). Specifically methylates the cytosine at position 1407 (m5C1407) of 16S rRNA. The protein is Ribosomal RNA small subunit methyltransferase F of Aliivibrio salmonicida (strain LFI1238) (Vibrio salmonicida (strain LFI1238)).